The primary structure comprises 465 residues: NADH-quinone oxidoreductase subunit N (465 aa).

A run of 13 helical transmembrane segments spans residues 9-29 (FNFVLLFPVLSLLFWAIVLLL), 44-64 (ASIIALFSTLCFLLIYNGFVL), 73-93 (LFVSDNYAIFAQIVILVFSML), 110-130 (FLFMIASLILMISSTNLIVIF), 159-179 (YFTLAAVGAGFFVFACAFVYL), 198-218 (PILLCAGVMFLVIVGVKLSIA), 235-255 (FIAFISIVPKIAMIIVVLRIF), 265-285 (EYIVALLAIFSMLAVSIVALI), 292-312 (MLAYSSITHSSFILAVIVSSM), 327-347 (IFALFVYWISFAFANYGIFLI), 371-391 (IMLAIFILCIAGIPPFGIFWG), 405-427 (YALVFAVALSSMIMLYAYLKILI), and 444-464 (VKQKIILCLCLIGSVSCVFLL).

This sequence belongs to the complex I subunit 2 family. As to quaternary structure, NDH-1 is composed of 14 different subunits. Subunits NuoA, H, J, K, L, M, N constitute the membrane sector of the complex.

It localises to the cell inner membrane. The catalysed reaction is a quinone + NADH + 5 H(+)(in) = a quinol + NAD(+) + 4 H(+)(out). Its function is as follows. NDH-1 shuttles electrons from NADH, via FMN and iron-sulfur (Fe-S) centers, to quinones in the respiratory chain. The immediate electron acceptor for the enzyme in this species is believed to be ubiquinone. Couples the redox reaction to proton translocation (for every two electrons transferred, four hydrogen ions are translocated across the cytoplasmic membrane), and thus conserves the redox energy in a proton gradient. This Campylobacter lari (strain RM2100 / D67 / ATCC BAA-1060) protein is NADH-quinone oxidoreductase subunit N.